The following is a 168-amino-acid chain: MRVGVYPGTFDPITLGHMDIIRRGAKLVDRLVIGVTTNITKSPLFDDDERIAMVKREVAAIEGDIQVVGFNSLLMDFAQREGATVIVRGLRAVADFEYEYQMAGMNQQLNDRIETVFLMADVGLQPIASRLVKEIAIFGGEIHKFVTPAVCKAVIARIAERGLRQGER.

Thr9 is a binding site for substrate. Residues 9-10 and His17 each bind ATP; that span reads TF. Substrate contacts are provided by Lys41, Leu74, and Arg88. Residues 89–91, Glu99, and 124–130 each bind ATP; these read GLR and LQPIASR.

This sequence belongs to the bacterial CoaD family. In terms of assembly, homohexamer. The cofactor is Mg(2+).

The protein localises to the cytoplasm. It carries out the reaction (R)-4'-phosphopantetheine + ATP + H(+) = 3'-dephospho-CoA + diphosphate. Its pathway is cofactor biosynthesis; coenzyme A biosynthesis; CoA from (R)-pantothenate: step 4/5. Reversibly transfers an adenylyl group from ATP to 4'-phosphopantetheine, yielding dephospho-CoA (dPCoA) and pyrophosphate. In Sphingopyxis alaskensis (strain DSM 13593 / LMG 18877 / RB2256) (Sphingomonas alaskensis), this protein is Phosphopantetheine adenylyltransferase.